A 158-amino-acid polypeptide reads, in one-letter code: MMRELLRNLIEDKTVINYKKWWMECKDAQETKLLAILCFYDIDDLPEETTAGLDKFVLDKLRVLSLLSLCELSTEVNYQEIKEKCDLKTDGEVEKLLIRAELFVDLKIDSVARRATVLEYKISRDVYSGEKGVPFHTPVRSKINILSALINWRSSLTD.

Residues 5-119 (LLRNLIEDKT…SVARRATVLE (115 aa)) enclose the PCI domain.

As to quaternary structure, component of a COP9 signalosome-like (CSN) complex.

The protein localises to the cytoplasm. It is found in the nucleus. Functionally, component of the COP9 signalosome (CSN) complex that acts as a regulator of the ubiquitin (Ubl) conjugation pathway by mediating the deneddylation of the cullin subunit of SCF-type E3 ubiquitin-protein ligase complexes. The complex is involved in the regulation of the mating pheromone response. The polypeptide is COP9 signalosome complex subunit 9 (CSN9) (Kluyveromyces lactis (strain ATCC 8585 / CBS 2359 / DSM 70799 / NBRC 1267 / NRRL Y-1140 / WM37) (Yeast)).